The sequence spans 227 residues: MAYPMQLGFQDATSPIMEELLHFHDHTLMIVFLISSLVLYIISLMLTTKLTHTSTMDAQEVETIWTILPAIILILIALPSLRILYMMDEINNPSLTVKTMGHQWYWSYEYTDYEDLSFDSYMIPTSELKPGELRLLEVDNRVVLPMEMTIRMLISSEDVLHSWTVPSLGLKTDAIPGRLNQTTLMSTRPGLYYGQCSEICGSNHSFMPIVLELVPLKYFEKWSASML.

At 1–14 (MAYPMQLGFQDATS) the chain is on the mitochondrial intermembrane side. Residues 15 to 45 (PIMEELLHFHDHTLMIVFLISSLVLYIISLM) traverse the membrane as a helical segment. Residues 46 to 59 (LTTKLTHTSTMDAQ) are Mitochondrial matrix-facing. A helical transmembrane segment spans residues 60–87 (EVETIWTILPAIILILIALPSLRILYMM). At 88–227 (DEINNPSLTV…YFEKWSASML (140 aa)) the chain is on the mitochondrial intermembrane side. His-161, Cys-196, Glu-198, Cys-200, His-204, and Met-207 together coordinate Cu cation. Glu-198 is a Mg(2+) binding site. Tyr-218 is subject to Phosphotyrosine.

The protein belongs to the cytochrome c oxidase subunit 2 family. In terms of assembly, component of the cytochrome c oxidase (complex IV, CIV), a multisubunit enzyme composed of 14 subunits. The complex is composed of a catalytic core of 3 subunits MT-CO1, MT-CO2 and MT-CO3, encoded in the mitochondrial DNA, and 11 supernumerary subunits COX4I, COX5A, COX5B, COX6A, COX6B, COX6C, COX7A, COX7B, COX7C, COX8 and NDUFA4, which are encoded in the nuclear genome. The complex exists as a monomer or a dimer and forms supercomplexes (SCs) in the inner mitochondrial membrane with NADH-ubiquinone oxidoreductase (complex I, CI) and ubiquinol-cytochrome c oxidoreductase (cytochrome b-c1 complex, complex III, CIII), resulting in different assemblies (supercomplex SCI(1)III(2)IV(1) and megacomplex MCI(2)III(2)IV(2)). Found in a complex with TMEM177, COA6, COX18, COX20, SCO1 and SCO2. Interacts with TMEM177 in a COX20-dependent manner. Interacts with COX20. Interacts with COX16. Requires Cu cation as cofactor.

It is found in the mitochondrion inner membrane. It catalyses the reaction 4 Fe(II)-[cytochrome c] + O2 + 8 H(+)(in) = 4 Fe(III)-[cytochrome c] + 2 H2O + 4 H(+)(out). In terms of biological role, component of the cytochrome c oxidase, the last enzyme in the mitochondrial electron transport chain which drives oxidative phosphorylation. The respiratory chain contains 3 multisubunit complexes succinate dehydrogenase (complex II, CII), ubiquinol-cytochrome c oxidoreductase (cytochrome b-c1 complex, complex III, CIII) and cytochrome c oxidase (complex IV, CIV), that cooperate to transfer electrons derived from NADH and succinate to molecular oxygen, creating an electrochemical gradient over the inner membrane that drives transmembrane transport and the ATP synthase. Cytochrome c oxidase is the component of the respiratory chain that catalyzes the reduction of oxygen to water. Electrons originating from reduced cytochrome c in the intermembrane space (IMS) are transferred via the dinuclear copper A center (CU(A)) of subunit 2 and heme A of subunit 1 to the active site in subunit 1, a binuclear center (BNC) formed by heme A3 and copper B (CU(B)). The BNC reduces molecular oxygen to 2 water molecules using 4 electrons from cytochrome c in the IMS and 4 protons from the mitochondrial matrix. The protein is Cytochrome c oxidase subunit 2 (MT-CO2) of Boselaphus tragocamelus (Nilgai).